Reading from the N-terminus, the 187-residue chain is Ribosome-recycling factor (187 aa).

The protein belongs to the RRF family.

The protein localises to the cytoplasm. Responsible for the release of ribosomes from messenger RNA at the termination of protein biosynthesis. May increase the efficiency of translation by recycling ribosomes from one round of translation to another. The chain is Ribosome-recycling factor from Methylobacterium sp. (strain 4-46).